A 330-amino-acid chain; its full sequence is Ferredoxin--NADP reductase (330 aa).

Positions 35, 43, 48, 90, 123, 285, and 326 each coordinate FAD.

The protein belongs to the ferredoxin--NADP reductase type 2 family. As to quaternary structure, homodimer. FAD serves as cofactor.

The enzyme catalyses 2 reduced [2Fe-2S]-[ferredoxin] + NADP(+) + H(+) = 2 oxidized [2Fe-2S]-[ferredoxin] + NADPH. In Streptococcus equi subsp. zooepidemicus (strain MGCS10565), this protein is Ferredoxin--NADP reductase.